A 250-amino-acid chain; its full sequence is DNA polymerase sliding clamp (250 aa).

The protein belongs to the PCNA family. As to quaternary structure, homotrimer. The subunits circularize to form a toroid; DNA passes through its center. Replication factor C (RFC) is required to load the toroid on the DNA.

Functionally, sliding clamp subunit that acts as a moving platform for DNA processing. Responsible for tethering the catalytic subunit of DNA polymerase and other proteins to DNA during high-speed replication. This Methanococcus maripaludis (strain DSM 14266 / JCM 13030 / NBRC 101832 / S2 / LL) protein is DNA polymerase sliding clamp.